Consider the following 566-residue polypeptide: Mucolipin-2 (566 aa).

Residues 1 to 65 lie on the Cytoplasmic side of the membrane; that stretch reads MPGDEETLDL…YRARRQIPWK (65 aa). A helical transmembrane segment spans residues 66 to 86; that stretch reads LGLQILKIVMVTTQLVRFGLS. At 87-288 the chain is on the extracellular side; the sequence is NQLVVAFKED…ISGSTQRSTH (202 aa). An extracellular/lumenal pore loop region spans residues 107 to 123; the sequence is KGFSGVDEDDYSCSIYT. Cystine bridges form between Cys-164–Cys-190 and Cys-243–Cys-274. The chain crosses the membrane as a helical span at residues 289-309; it reads YLLVFDVFVIMICLASLILCT. The Cytoplasmic segment spans residues 310 to 346; sequence RSIVLALRLRKRFLNFFLEKYKQRVCGADQWEFVNGW. Residues 347–367 form a helical membrane-spanning segment; the sequence is YVLVTISDLMTIIGSILKMEI. Residues 368–376 lie on the Extracellular side of the membrane; that stretch reads KAKKLTNYD. A helical membrane pass occupies residues 377–397; sequence VCSILLGTSTLFVWVGVIRYL. Topologically, residues 398–419 are cytoplasmic; that stretch reads GYFQTYNVLILTMQASLPKVLR. Residues 420 to 440 form a helical membrane-spanning segment; sequence FCACAGMIYLGYTFCGWIVLG. Residues 441-448 lie on the Extracellular side of the membrane; sequence PYHEKFEN. An intramembrane region (pore-forming) is located at residues 449 to 469; sequence LNIVAECLFSLVNGDDMFATF. The Selectivity filter signature appears at 461–464; the sequence is NGDD. The Extracellular portion of the chain corresponds to 470–480; it reads AQIQQKSILVW. A helical transmembrane segment spans residues 481 to 502; the sequence is LFSRLYLYSFISLFIYMVLSLF. Topologically, residues 503–566 are cytoplasmic; that stretch reads IALITDSYHT…RSNDHLILID (64 aa).

The protein belongs to the transient receptor (TC 1.A.4) family. Polycystin subfamily. MCOLN2 sub-subfamily. As to quaternary structure, forms homooligomeric complexes; probably tetrameric. Can heterooligomerize with MCOLN1; heteromeric assemblies have different channel properties as compared to the respective homooligomers and may be tissue-specific. Interacts with TMEM176A. Expressed in activated macrophages and microglia (at protein level). As to expression, isoform 1 is widely expressed at very low levels. In terms of tissue distribution, isoform 2 is expressed at high levels in lymphoid tissues (thymus and spleen) and kidney, and at moderate levels in heart, lung, liver and stomach.

It is found in the cell membrane. It localises to the lysosome membrane. The protein localises to the recycling endosome membrane. The catalysed reaction is Ca(2+)(in) = Ca(2+)(out). It carries out the reaction Fe(2+)(in) = Fe(2+)(out). Its activity is regulated as follows. Fe(2+) channel activity is potentiated by low pH. Its function is as follows. Nonselective cation channel probably playing a role in the regulation of membrane trafficking events. Acts as a Ca(2+)-permeable cation channel with inwardly rectifying activity. May activate ARF6 and be involved in the trafficking of GPI-anchored cargo proteins to the cell surface via the ARF6-regulated recycling pathway. May play a role in immune processes. In adaptive immunity, TRPML2 and TRPML1 may play redundant roles in the function of the specialized lysosomes of B cells. In the innate immune response, may play a role in the regulation of chemokine secretion and macrophage migration. Through a possible and probably tissue-specific heteromerization with MCOLN1 may be at least in part involved in many lysosome-dependent cellular events. Also functions as a Fe(2+) permeable channel. In Mus musculus (Mouse), this protein is Mucolipin-2 (Mcoln2).